Reading from the N-terminus, the 403-residue chain is D-galactonate dehydratase family member RspA (403 aa).

Asparagine 37 and histidine 122 together coordinate substrate. Tyrosine 159 acts as the Proton donor/acceptor in catalysis. Aspartate 211 provides a ligand contact to Mg(2+). Histidine 213 serves as the catalytic Proton donor/acceptor. Glutamate 237 and glutamate 263 together coordinate Mg(2+). Residues glutamate 263, arginine 284, histidine 313, aspartate 317, and glutamate 340 each coordinate substrate.

Belongs to the mandelate racemase/muconate lactonizing enzyme family. GalD subfamily. The cofactor is Mg(2+).

The enzyme catalyses D-mannonate = 2-dehydro-3-deoxy-D-gluconate + H2O. It catalyses the reaction D-gluconate = 2-dehydro-3-deoxy-D-gluconate + H2O. Its function is as follows. Has low dehydratase activity with D-mannonate and D-gluconate, suggesting that these are not physiological substrates and that it has no significant role in the in vivo degradation of these compounds. Has no detectable activity with a panel of 70 other acid sugars (in vitro). The chain is D-galactonate dehydratase family member RspA (rspA) from Halomonas elongata (strain ATCC 33173 / DSM 2581 / NBRC 15536 / NCIMB 2198 / 1H9).